Reading from the N-terminus, the 458-residue chain is Bifunctional protein GlmU (458 aa).

The pyrophosphorylase stretch occupies residues 1 to 231 (MSNRALSVVV…QTEVEGVNNR (231 aa)). UDP-N-acetyl-alpha-D-glucosamine is bound by residues 11–14 (LAAG), Lys-25, Gln-78, 83–84 (GT), 105–107 (YGD), Gly-142, Glu-156, Asn-171, and Asn-229. Asp-107 contacts Mg(2+). Position 229 (Asn-229) interacts with Mg(2+). The segment at 232-252 (LQLARLERLFQREQAERLLLA) is linker. The interval 253-458 (GVMLSDPDRF…ANWTRPVKKK (206 aa)) is N-acetyltransferase. Residues Arg-335 and Lys-353 each contribute to the UDP-N-acetyl-alpha-D-glucosamine site. The active-site Proton acceptor is the His-365. Residues Tyr-368 and Asn-379 each contribute to the UDP-N-acetyl-alpha-D-glucosamine site. Residues Ala-382, 388–389 (NY), Ser-407, Ala-425, and Arg-442 contribute to the acetyl-CoA site.

This sequence in the N-terminal section; belongs to the N-acetylglucosamine-1-phosphate uridyltransferase family. It in the C-terminal section; belongs to the transferase hexapeptide repeat family. In terms of assembly, homotrimer. The cofactor is Mg(2+).

It is found in the cytoplasm. It carries out the reaction alpha-D-glucosamine 1-phosphate + acetyl-CoA = N-acetyl-alpha-D-glucosamine 1-phosphate + CoA + H(+). It catalyses the reaction N-acetyl-alpha-D-glucosamine 1-phosphate + UTP + H(+) = UDP-N-acetyl-alpha-D-glucosamine + diphosphate. The protein operates within nucleotide-sugar biosynthesis; UDP-N-acetyl-alpha-D-glucosamine biosynthesis; N-acetyl-alpha-D-glucosamine 1-phosphate from alpha-D-glucosamine 6-phosphate (route II): step 2/2. It functions in the pathway nucleotide-sugar biosynthesis; UDP-N-acetyl-alpha-D-glucosamine biosynthesis; UDP-N-acetyl-alpha-D-glucosamine from N-acetyl-alpha-D-glucosamine 1-phosphate: step 1/1. Its pathway is bacterial outer membrane biogenesis; LPS lipid A biosynthesis. Catalyzes the last two sequential reactions in the de novo biosynthetic pathway for UDP-N-acetylglucosamine (UDP-GlcNAc). The C-terminal domain catalyzes the transfer of acetyl group from acetyl coenzyme A to glucosamine-1-phosphate (GlcN-1-P) to produce N-acetylglucosamine-1-phosphate (GlcNAc-1-P), which is converted into UDP-GlcNAc by the transfer of uridine 5-monophosphate (from uridine 5-triphosphate), a reaction catalyzed by the N-terminal domain. This Sodalis glossinidius (strain morsitans) protein is Bifunctional protein GlmU.